Consider the following 83-residue polypeptide: MVVIRLARGGAKNRPFYNIVVTDSRNRRDGRFIERVGFYNPVANEKQERVRFTMDRLNYWVGVGAQLSDSVAKLLKEQKVVAA.

This sequence belongs to the bacterial ribosomal protein bS16 family.

The sequence is that of Small ribosomal subunit protein bS16 from Chromobacterium violaceum (strain ATCC 12472 / DSM 30191 / JCM 1249 / CCUG 213 / NBRC 12614 / NCIMB 9131 / NCTC 9757 / MK).